We begin with the raw amino-acid sequence, 247 residues long: Protein lin-28 homolog B (247 aa).

Positions 1-22 (MAEGGASKGEEPEKLPGLAEDE) are disordered. Positions 27–100 (HGTGHCKWFN…GLESIRVTGP (74 aa)) constitute a CSD domain. Residues serine 94, serine 103, and serine 108 each carry the phosphoserine modification. Residues 96 to 124 (RVTGPGGSPCLGSERRPKGKTLQKRKPKG) form a disordered region. Residues 112–123 (PKGKTLQKRKPK) show a composition bias toward basic residues. 2 CCHC-type zinc fingers span residues 125-142 (DRCYNCGGLDHHAKECSL) and 147-164 (KKCHYCQSIMHMVANCPH). The Zn(2+) site is built by cysteine 127, cysteine 130, histidine 135, cysteine 140, cysteine 149, cysteine 152, histidine 157, and cysteine 162. Polar residues predominate over residues 173 to 186 (SSQGRQEAESQPCS). Residues 173 to 247 (SSQGRQEAES…GPLIQKRKKT (75 aa)) are disordered. The span at 207–219 (VKSEMAEHSDRSP) shows a compositional bias: basic and acidic residues.

It belongs to the lin-28 family.

The protein localises to the nucleus. Its subcellular location is the nucleolus. Functionally, suppressor of microRNA (miRNA) biogenesis, including that of let-7 and possibly of miR107, miR-143 and miR-200c. Binds primary let-7 transcripts (pri-let-7), including pri-let-7g and pri-let-7a-1, and sequester them in the nucleolus, away from the microprocessor complex, hence preventing their processing into mature miRNA. Does not act on pri-miR21. The repression of let-7 expression is required for normal development and contributes to maintain the pluripotent state of embryonic stem cells by preventing let-7-mediated differentiation. When overexpressed, recruits ZCCHC11/TUT4 uridylyltransferase to pre-let-7 transcripts, leading to their terminal uridylation and degradation. This activity might not be relevant in vivo, as LIN28B-mediated inhibition of let-7 miRNA maturation appears to be ZCCHC11-independent. Interaction with target pre-miRNAs occurs via an 5'-GGAG-3' motif in the pre-miRNA terminal loop. Mediates MYC-induced let-7 repression. When overexpressed, may stimulate growth of carcinoma cell lines. The sequence is that of Protein lin-28 homolog B (Lin28b) from Mus musculus (Mouse).